A 579-amino-acid chain; its full sequence is CTP synthase (579 aa).

In terms of domain architecture, Glutamine amidotransferase type-1 spans 310-558 (YVELHDAYLS…VAAAIGCLDQ (249 aa)). Active-site for GATase activity residues include cysteine 402, histidine 531, and glutamate 533.

This sequence belongs to the CTP synthase family.

It catalyses the reaction UTP + L-glutamine + ATP + H2O = CTP + L-glutamate + ADP + phosphate + 2 H(+). It functions in the pathway pyrimidine metabolism; CTP biosynthesis via de novo pathway; CTP from UDP: step 2/2. Functionally, catalyzes the ATP-dependent amination of UTP to CTP with either L-glutamine or ammonia as the source of nitrogen. The sequence is that of CTP synthase (pyr-7) from Neurospora crassa (strain ATCC 24698 / 74-OR23-1A / CBS 708.71 / DSM 1257 / FGSC 987).